Consider the following 110-residue polypeptide: MHEMSITQNVVEICEKSAEGRRILAVVLEIGELSGVVPEAVEFCFEACTAGTLAEGARLAIDRVPGRGECGNCATVFPVRTYFDPCPACGAYGVRVVAGEELRVKELEVE.

Residue histidine 2 participates in Ni(2+) binding. Zn(2+) is bound by residues cysteine 70, cysteine 73, cysteine 86, and cysteine 89.

It belongs to the HypA/HybF family.

Its function is as follows. Involved in the maturation of [NiFe] hydrogenases. Required for nickel insertion into the metal center of the hydrogenase. This is Hydrogenase maturation factor HypA from Geobacter sulfurreducens (strain ATCC 51573 / DSM 12127 / PCA).